We begin with the raw amino-acid sequence, 356 residues long: Adenine deaminase (356 aa).

The Zn(2+) site is built by His-23, His-25, and His-211. The Proton donor role is filled by Glu-214. Asp-292 contacts Zn(2+). A substrate-binding site is contributed by Asp-293.

This sequence belongs to the metallo-dependent hydrolases superfamily. Adenosine and AMP deaminases family. Adenine deaminase type 2 subfamily. It depends on Zn(2+) as a cofactor.

It is found in the cytoplasm. The protein localises to the nucleus. The enzyme catalyses adenine + H2O + H(+) = hypoxanthine + NH4(+). Functionally, catalyzes the hydrolytic deamination of adenine to hypoxanthine. Plays an important role in the purine salvage pathway and in nitrogen catabolism. The protein is Adenine deaminase of Candida albicans (strain SC5314 / ATCC MYA-2876) (Yeast).